A 319-amino-acid polypeptide reads, in one-letter code: Acetyl-coenzyme A carboxylase carboxyl transferase subunit alpha (319 aa).

Residues 35 to 296 form the CoA carboxyltransferase C-terminal domain; that stretch reads NLDEEVQRLR…KAQLLADLAD (262 aa).

This sequence belongs to the AccA family. Acetyl-CoA carboxylase is a heterohexamer composed of biotin carboxyl carrier protein (AccB), biotin carboxylase (AccC) and two subunits each of ACCase subunit alpha (AccA) and ACCase subunit beta (AccD).

The protein resides in the cytoplasm. The catalysed reaction is N(6)-carboxybiotinyl-L-lysyl-[protein] + acetyl-CoA = N(6)-biotinyl-L-lysyl-[protein] + malonyl-CoA. The protein operates within lipid metabolism; malonyl-CoA biosynthesis; malonyl-CoA from acetyl-CoA: step 1/1. In terms of biological role, component of the acetyl coenzyme A carboxylase (ACC) complex. First, biotin carboxylase catalyzes the carboxylation of biotin on its carrier protein (BCCP) and then the CO(2) group is transferred by the carboxyltransferase to acetyl-CoA to form malonyl-CoA. The chain is Acetyl-coenzyme A carboxylase carboxyl transferase subunit alpha from Erwinia tasmaniensis (strain DSM 17950 / CFBP 7177 / CIP 109463 / NCPPB 4357 / Et1/99).